A 65-amino-acid polypeptide reads, in one-letter code: Large ribosomal subunit protein bL35 (65 aa).

The protein belongs to the bacterial ribosomal protein bL35 family.

This Caldicellulosiruptor saccharolyticus (strain ATCC 43494 / DSM 8903 / Tp8T 6331) protein is Large ribosomal subunit protein bL35.